Here is a 300-residue protein sequence, read N- to C-terminus: Aspartate carbamoyltransferase catalytic subunit (300 aa).

Carbamoyl phosphate contacts are provided by Arg54 and Thr55. Lys82 lines the L-aspartate pocket. 3 residues coordinate carbamoyl phosphate: Arg104, His131, and Gln134. Positions 164 and 213 each coordinate L-aspartate. Carbamoyl phosphate-binding residues include Ala256 and Pro257.

Belongs to the aspartate/ornithine carbamoyltransferase superfamily. ATCase family. In terms of assembly, heterododecamer (2C3:3R2) of six catalytic PyrB chains organized as two trimers (C3), and six regulatory PyrI chains organized as three dimers (R2).

It carries out the reaction carbamoyl phosphate + L-aspartate = N-carbamoyl-L-aspartate + phosphate + H(+). The protein operates within pyrimidine metabolism; UMP biosynthesis via de novo pathway; (S)-dihydroorotate from bicarbonate: step 2/3. Functionally, catalyzes the condensation of carbamoyl phosphate and aspartate to form carbamoyl aspartate and inorganic phosphate, the committed step in the de novo pyrimidine nucleotide biosynthesis pathway. The polypeptide is Aspartate carbamoyltransferase catalytic subunit (Malacoplasma penetrans (strain HF-2) (Mycoplasma penetrans)).